The chain runs to 424 residues: Enolase (424 aa).

A (2R)-2-phosphoglycerate-binding site is contributed by Gln162. Glu204 (proton donor) is an active-site residue. Residues Asp241, Glu284, and Asp311 each contribute to the Mg(2+) site. Residues Lys336, Arg365, Ser366, and Lys387 each coordinate (2R)-2-phosphoglycerate. Residue Lys336 is the Proton acceptor of the active site.

This sequence belongs to the enolase family. It depends on Mg(2+) as a cofactor.

It is found in the cytoplasm. The protein resides in the secreted. Its subcellular location is the cell surface. The catalysed reaction is (2R)-2-phosphoglycerate = phosphoenolpyruvate + H2O. It functions in the pathway carbohydrate degradation; glycolysis; pyruvate from D-glyceraldehyde 3-phosphate: step 4/5. In terms of biological role, catalyzes the reversible conversion of 2-phosphoglycerate (2-PG) into phosphoenolpyruvate (PEP). It is essential for the degradation of carbohydrates via glycolysis. This is Enolase from Rhizobium meliloti (strain 1021) (Ensifer meliloti).